The following is a 270-amino-acid chain: Small ribosomal subunit protein uS2 (270 aa).

Acidic residues predominate over residues 207-225; the sequence is EEPENTEEAAEEAATEEVV. The interval 207–270 is disordered; sequence EEPENTEEAA…SESAPAPVAA (64 aa). A compositionally biased stretch (low complexity) spans 226 to 258; sequence ETAAAEAAAATNADNWDVAPDAGAGAADWAATD.

The protein belongs to the universal ribosomal protein uS2 family. In terms of assembly, component of the small ribosomal subunit. Mature ribosomes consist of a small (40S) and a large (60S) subunit. The 40S subunit contains about 33 different proteins and 1 molecule of RNA (18S). The 60S subunit contains about 49 different proteins and 3 molecules of RNA (25S, 5.8S and 5S). Interacts with RPS21.

It is found in the cytoplasm. Required for the assembly and/or stability of the 40S ribosomal subunit. Required for the processing of the 20S rRNA-precursor to mature 18S rRNA in a late step of the maturation of 40S ribosomal subunits. The chain is Small ribosomal subunit protein uS2 from Yarrowia lipolytica (strain CLIB 122 / E 150) (Yeast).